The primary structure comprises 403 residues: Phosphopentomutase (403 aa).

Positions 13, 298, 303, 339, 340, and 351 each coordinate Mn(2+).

The protein belongs to the phosphopentomutase family. Mn(2+) is required as a cofactor.

The protein resides in the cytoplasm. It carries out the reaction 2-deoxy-alpha-D-ribose 1-phosphate = 2-deoxy-D-ribose 5-phosphate. The catalysed reaction is alpha-D-ribose 1-phosphate = D-ribose 5-phosphate. Its pathway is carbohydrate degradation; 2-deoxy-D-ribose 1-phosphate degradation; D-glyceraldehyde 3-phosphate and acetaldehyde from 2-deoxy-alpha-D-ribose 1-phosphate: step 1/2. Isomerase that catalyzes the conversion of deoxy-ribose 1-phosphate (dRib-1-P) and ribose 1-phosphate (Rib-1-P) to deoxy-ribose 5-phosphate (dRib-5-P) and ribose 5-phosphate (Rib-5-P), respectively. This chain is Phosphopentomutase, found in Streptococcus pyogenes serotype M5 (strain Manfredo).